The sequence spans 97 residues: Class II hydrophobin 3 (97 aa).

The signal sequence occupies residues 1-16; the sequence is MKFFAAAALFIAGVLA. 4 disulfides stabilise this stretch: Cys-30-Cys-79, Cys-40-Cys-70, Cys-41-Cys-53, and Cys-80-Cys-91.

It belongs to the cerato-ulmin hydrophobin family. In terms of assembly, homodimer. Homodimers further self-assemble to form highly ordered films at water-air interfaces through intermolecular interactions.

Its subcellular location is the secreted. It localises to the cell wall. Its function is as follows. Aerial growth, conidiation, and dispersal of filamentous fungi in the environment rely upon a capability of their secreting small amphipathic proteins called hydrophobins (HPBs) with low sequence identity. Class I can self-assemble into an outermost layer of rodlet bundles on aerial cell surfaces, conferring cellular hydrophobicity that supports fungal growth, development and dispersal; whereas Class II form highly ordered films at water-air interfaces through intermolecular interactions but contribute nothing to the rodlet structure. The polypeptide is Class II hydrophobin 3 (Trichoderma asperellum (strain ATCC 204424 / CBS 433.97 / NBRC 101777)).